Reading from the N-terminus, the 391-residue chain is Pyruvate dehydrogenase E1 component subunit alpha, mitochondrial (391 aa).

A mitochondrion-targeting transit peptide spans 1–26 (MALSTSRAINHIMKPLSAAVCATRRL). Pyruvate-binding residues include H92, Y118, R119, G167, V169, D198, G199, A200, N227, and Y229. 8 residues coordinate thiamine diphosphate: Y118, R119, G167, V169, D198, G199, A200, and N227. Mg(2+) is bound at residue D198. N227 and Y229 together coordinate Mg(2+). Residue H293 coordinates thiamine diphosphate. The interval 294–313 (SMSDPGSTYRTRDEISGVRQ) is disordered. A compositionally biased stretch (basic and acidic residues) spans 303–313 (RTRDEISGVRQ).

Tetramer of 2 alpha and 2 beta subunits. Requires thiamine diphosphate as cofactor. It depends on Mg(2+) as a cofactor.

Its subcellular location is the mitochondrion matrix. The enzyme catalyses N(6)-[(R)-lipoyl]-L-lysyl-[protein] + pyruvate + H(+) = N(6)-[(R)-S(8)-acetyldihydrolipoyl]-L-lysyl-[protein] + CO2. Its activity is regulated as follows. E1 activity is regulated by phosphorylation (inactivation) and dephosphorylation (activation) of the alpha subunit. In terms of biological role, the pyruvate dehydrogenase complex catalyzes the overall conversion of pyruvate to acetyl-CoA and CO(2). It contains multiple copies of three enzymatic components: pyruvate dehydrogenase (E1), dihydrolipoamide acetyltransferase (E2) and lipoamide dehydrogenase (E3). The chain is Pyruvate dehydrogenase E1 component subunit alpha, mitochondrial from Solanum tuberosum (Potato).